The sequence spans 206 residues: Ras-related protein RABG3c (206 aa).

15–22 (GDSGVGKT) contacts GTP. The Effector region signature appears at 37–45 (YKATIGADF). GTP is bound by residues 63 to 67 (DTAGQ), 125 to 128 (NKTD), and 158 to 159 (SA). 2 S-geranylgeranyl cysteine lipidation sites follow: Cys204 and Cys206. Cys206 carries the post-translational modification Cysteine methyl ester.

Belongs to the small GTPase superfamily. Rab family.

The protein localises to the cell membrane. Functionally, intracellular vesicle trafficking and protein transport. This chain is Ras-related protein RABG3c (RABG3C), found in Arabidopsis thaliana (Mouse-ear cress).